The primary structure comprises 61 residues: Large ribosomal subunit protein bL32 (61 aa).

The segment covering 1–16 has biased composition (basic residues); the sequence is MAVPKRKTSPSKRGMR. Residues 1 to 61 form a disordered region; the sequence is MAVPKRKTSP…RQVLTPKESA (61 aa). Positions 28-44 are enriched in basic and acidic residues; that stretch reads VEDKNSGELRRPHHIDL.

Belongs to the bacterial ribosomal protein bL32 family.

The protein is Large ribosomal subunit protein bL32 of Rhizobium etli (strain CIAT 652).